A 517-amino-acid polypeptide reads, in one-letter code: ATP synthase subunit alpha (517 aa).

174–181 (GDRQTGKT) provides a ligand contact to ATP.

The protein belongs to the ATPase alpha/beta chains family. As to quaternary structure, F-type ATPases have 2 components, CF(1) - the catalytic core - and CF(0) - the membrane proton channel. CF(1) has five subunits: alpha(3), beta(3), gamma(1), delta(1), epsilon(1). CF(0) has four main subunits: a(1), b(1), b'(1) and c(9-12).

Its subcellular location is the cell inner membrane. It carries out the reaction ATP + H2O + 4 H(+)(in) = ADP + phosphate + 5 H(+)(out). In terms of biological role, produces ATP from ADP in the presence of a proton gradient across the membrane. The alpha chain is a regulatory subunit. The sequence is that of ATP synthase subunit alpha from Methylibium petroleiphilum (strain ATCC BAA-1232 / LMG 22953 / PM1).